Consider the following 216-residue polypeptide: Large ribosomal subunit protein uL3 (216 aa).

Q157 carries the N5-methylglutamine modification.

Belongs to the universal ribosomal protein uL3 family. As to quaternary structure, part of the 50S ribosomal subunit. Forms a cluster with proteins L14 and L19. Post-translationally, methylated by PrmB.

One of the primary rRNA binding proteins, it binds directly near the 3'-end of the 23S rRNA, where it nucleates assembly of the 50S subunit. In Stenotrophomonas maltophilia (strain R551-3), this protein is Large ribosomal subunit protein uL3.